A 152-amino-acid polypeptide reads, in one-letter code: Protein FERTILITY RESTORER RF2, mitochondrial (152 aa).

A mitochondrion-targeting transit peptide spans 1–52 (MSTLVTCSLPGAVTTHASTRRFGGSQFQTSQASCISFKREVSAKAVLRSVRC). Over residues 52–69 (CNATQTQSAQRKSSTATV) the composition is skewed to polar residues. Residues 52-99 (CNATQTQSAQRKSSTATVKRSDPKGKIQGPKLDDGSGGFPPFRFGKGG) are disordered.

Its subcellular location is the mitochondrion. In terms of biological role, restores fertility in rice varieties with LD-type cytoplasmic male sterility (CMS). CMS is caused by genetic incompatibility between nuclei and mitochondria within male reproductive organs. Corresponds to the functional allele of RF2, which is dependent of the presence of Ile-78 in the japonica cultivars Fukuyama and Owarihatamochi (AC F1SZ42), and indica cultivar Kasalath (AC F1SZ41). Non-functional RF2 alleles are found in japonica cultivars Taichung 65 and Nipponbare (AC F1SZ44), where Ile-78 is replaced by Thr-78. In Oryza sativa subsp. japonica (Rice), this protein is Protein FERTILITY RESTORER RF2, mitochondrial.